A 74-amino-acid chain; its full sequence is ATP synthase subunit 9, mitochondrial (74 aa).

2 helical membrane passes run 12–32 (LATIGLAGAGVGVGLVFAALI) and 50–70 (ILGFALTEAIGLFALMMAFLL).

Belongs to the ATPase C chain family. In terms of assembly, F-type ATPases have 2 components, CF(1) - the catalytic core - and CF(0) - the membrane proton channel. CF(1) has five subunits: alpha(3), beta(3), gamma(1), delta(1), epsilon(1). CF(0) has three main subunits: a, b and c.

It is found in the mitochondrion membrane. Functionally, mitochondrial membrane ATP synthase (F(1)F(0) ATP synthase or Complex V) produces ATP from ADP in the presence of a proton gradient across the membrane which is generated by electron transport complexes of the respiratory chain. F-type ATPases consist of two structural domains, F(1) - containing the extramembraneous catalytic core and F(0) - containing the membrane proton channel, linked together by a central stalk and a peripheral stalk. During catalysis, ATP synthesis in the catalytic domain of F(1) is coupled via a rotary mechanism of the central stalk subunits to proton translocation. Part of the complex F(0) domain. A homomeric c-ring of probably 10 subunits is part of the complex rotary element. This chain is ATP synthase subunit 9, mitochondrial, found in Rhizopus oryzae (Mucormycosis agent).